Reading from the N-terminus, the 64-residue chain is Large ribosomal subunit protein bL35 (64 aa).

Positions Gly20–Arg42 are disordered. Positions Glu25–Lys35 are enriched in basic and acidic residues.

It belongs to the bacterial ribosomal protein bL35 family.

The chain is Large ribosomal subunit protein bL35 from Chlorobium phaeobacteroides (strain BS1).